Here is a 146-residue protein sequence, read N- to C-terminus: Large ribosomal subunit protein uL13 (146 aa).

Residues 126-146 (AGPKHPHAAQQPKVYEPRPRG) are disordered.

Belongs to the universal ribosomal protein uL13 family. Part of the 50S ribosomal subunit.

This protein is one of the early assembly proteins of the 50S ribosomal subunit, although it is not seen to bind rRNA by itself. It is important during the early stages of 50S assembly. This is Large ribosomal subunit protein uL13 from Roseiflexus castenholzii (strain DSM 13941 / HLO8).